We begin with the raw amino-acid sequence, 525 residues long: Cobyric acid synthase (525 aa).

A GATase cobBQ-type domain is found at 251–452 (ELEIAVLYLP…FHGIFDNDLL (202 aa)). Residue Cys332 is the Nucleophile of the active site. His444 is a catalytic residue.

This sequence belongs to the CobB/CobQ family. CobQ subfamily.

The protein operates within cofactor biosynthesis; adenosylcobalamin biosynthesis. In terms of biological role, catalyzes amidations at positions B, D, E, and G on adenosylcobyrinic A,C-diamide. NH(2) groups are provided by glutamine, and one molecule of ATP is hydrogenolyzed for each amidation. The chain is Cobyric acid synthase from Pelotomaculum thermopropionicum (strain DSM 13744 / JCM 10971 / SI).